Consider the following 275-residue polypeptide: MAVRKTKPTSPGRRFQEFGTFEEITKKKPEKSLIKVVKKSGGRNANGRVTCRHRGGGSRRQLRIVDFKRNKTGIPAKVAAIEYDPNRGARLALLHYVDGEKRYIIAPVNLTVGDMVESGPEADIKPGNALPLNNIPLGTQIHNIELKVGKGGQVVRGAGTFAQLVAKEGKYAQVRLPSGEVRLVLLKCMATIGQVGNVEHENLALGKAGRKRWLGRRPSVRGVAMNPVDHPMGGGEGRSSGGRHPCSPWGMPTKGYKTRKNKTTDKFIVRKRNKR.

The interval G222–R275 is disordered.

The protein belongs to the universal ribosomal protein uL2 family. As to quaternary structure, part of the 50S ribosomal subunit. Forms a bridge to the 30S subunit in the 70S ribosome.

One of the primary rRNA binding proteins. Required for association of the 30S and 50S subunits to form the 70S ribosome, for tRNA binding and peptide bond formation. It has been suggested to have peptidyltransferase activity; this is somewhat controversial. Makes several contacts with the 16S rRNA in the 70S ribosome. This Desulfatibacillum aliphaticivorans protein is Large ribosomal subunit protein uL2.